We begin with the raw amino-acid sequence, 1106 residues long: Protein kinase C (1106 aa).

The region spanning 1-67 (MDGDDLIASV…MRELQLRQMK (67 aa)) is the REM-1 1 domain. The interval 65–138 (QMKQEGASPT…PRPFAPVPKA (74 aa)) is disordered. Residues 79 to 93 (PPNPDGSAPVPPPKD) show a composition bias toward pro residues. An REM-1 2 domain is found at 149-226 (KYDTPYLGPK…LKRYEDLHVD (78 aa)). Residues 232–350 (APDDESLSTP…MRRKKIESEF (119 aa)) form the C2 domain. Positions 361-370 (MEHGAAHGRQ) are enriched in basic and acidic residues. A disordered region spans residues 361–400 (MEHGAAHGRQDAGGAPGSSNRPPSGGHSGGPGQGYAGGAP). A compositionally biased stretch (gly residues) spans 386 to 400 (GHSGGPGQGYAGGAP). Phorbol-ester/DAG-type zinc fingers lie at residues 460-508 (GHKF…VTKC) and 528-578 (PHRF…PDFC). Composition is skewed to polar residues over residues 600 to 609 (KSASVSSGLS) and 658 to 668 (YIPPQSPTAAQ). Disordered regions lie at residues 600–625 (KSASVSSGLSGRTLRPGGPPQAPQDN) and 658–719 (YIPP…HAHY). Residues 683-693 (AAAAAAAAAAA) are compositionally biased toward low complexity. The region spanning 781 to 1040 (FNFLAVLGKG…AQEVMSHAFF (260 aa)) is the Protein kinase domain. Residues 787–795 (LGKGNFGKV) and Lys-810 contribute to the ATP site. The active-site Proton acceptor is Asp-906. Residues 1041 to 1106 (RNINWDDIYH…RGFSYTADFA (66 aa)) enclose the AGC-kinase C-terminal domain. Residue Thr-1082 is modified to Phosphothreonine. Position 1100 is a phosphoserine (Ser-1100). Residue Tyr-1101 is modified to Phosphotyrosine.

Belongs to the protein kinase superfamily. AGC Ser/Thr protein kinase family. PKC subfamily. Interacts with hsp90.

It carries out the reaction L-seryl-[protein] + ATP = O-phospho-L-seryl-[protein] + ADP + H(+). The enzyme catalyses L-threonyl-[protein] + ATP = O-phospho-L-threonyl-[protein] + ADP + H(+). Its function is as follows. Protein kinase C; part of cell wall integrity (CWI) signaling pathway composed of pkcA, the bck1-mkk2-mpka MAPK cascade and the downstream rlmA transcription regulator. The CWI signaling pathway regulates cell wall integrity and pyomelanin formation. CWI also controls oxidative stress response, gliotoxin production, iron adaptation and asexual development. Finally, CWI is constitutively required for A.fumigatus to cope with the temperature increase found in the mammalian lung environment, during infection. Modulates the expression of fumiquinazoline cluster during conidiogenesis. This is Protein kinase C from Aspergillus fumigatus (strain ATCC MYA-4609 / CBS 101355 / FGSC A1100 / Af293) (Neosartorya fumigata).